The primary structure comprises 435 residues: Monodehydroascorbate reductase 4, cytosolic (435 aa).

FAD is bound by residues Gly-14–Ala-17, Glu-41, Arg-48, Lys-53, Ile-96, and Arg-147–Asp-148. Residues Gly-172–Glu-178, Glu-196, Arg-202, and Gly-261 contribute to the NAD(+) site. Position 174-178 (Tyr-174–Glu-178) interacts with NADP(+). 2 residues coordinate NADP(+): Arg-202 and Gly-261. Asp-298 lines the FAD pocket. Position 314-315 (Glu-314–His-315) interacts with NAD(+). Glu-314–His-315 contacts NADP(+). Val-316 serves as a coordination point for FAD. Arg-320 is an L-ascorbate binding site. FAD is bound at residue Tyr-349. Residue Tyr-349 participates in NAD(+) binding. Tyr-349 serves as a coordination point for NADP(+). Arg-351 contributes to the L-ascorbate binding site.

Belongs to the FAD-dependent oxidoreductase family. Requires FAD as cofactor. In terms of tissue distribution, expressed in anthers.

It is found in the cytoplasm. The catalysed reaction is 2 monodehydro-L-ascorbate radical + NADH + H(+) = 2 L-ascorbate + NAD(+). Catalyzes the conversion of monodehydroascorbate to ascorbate, oxidizing NADH in the process. Ascorbate is a major antioxidant against reactive oxygen species (ROS) and nitric oxide (NO). This chain is Monodehydroascorbate reductase 4, cytosolic, found in Oryza sativa subsp. japonica (Rice).